We begin with the raw amino-acid sequence, 33 residues long: Gastrin (33 aa).

Pyrrolidone carboxylic acid is present on residues glutamine 1 and glutamine 18. Tyrosine 28 is subject to Sulfotyrosine. Phenylalanine 33 bears the Phenylalanine amide mark.

Belongs to the gastrin/cholecystokinin family.

The protein resides in the secreted. Gastrin stimulates the stomach mucosa to produce and secrete hydrochloric acid and the pancreas to secrete its digestive enzymes. It also stimulates smooth muscle contraction and increases blood circulation and water secretion in the stomach and intestine. In Didelphis virginiana (North American opossum), this protein is Gastrin (GAST).